The primary structure comprises 363 residues: Putative lipoate-protein ligase A (363 aa).

In terms of domain architecture, BPL/LPL catalytic spans 49–229 (STAKHCLLLY…CFLLHKSHST (181 aa)). Residues Arg91, 96–99 (GTVF), and Lys152 contribute to the ATP site. Lys152 is a (R)-lipoate binding site.

Belongs to the LplA family. Monomer.

It is found in the cytoplasm. It carries out the reaction L-lysyl-[lipoyl-carrier protein] + (R)-lipoate + ATP = N(6)-[(R)-lipoyl]-L-lysyl-[lipoyl-carrier protein] + AMP + diphosphate + H(+). Its pathway is protein modification; protein lipoylation via exogenous pathway; protein N(6)-(lipoyl)lysine from lipoate: step 1/2. It participates in protein modification; protein lipoylation via exogenous pathway; protein N(6)-(lipoyl)lysine from lipoate: step 2/2. Catalyzes both the ATP-dependent activation of exogenously supplied lipoate to lipoyl-AMP and the transfer of the activated lipoyl onto the lipoyl domains of lipoate-dependent enzymes. In Schizosaccharomyces pombe (strain 972 / ATCC 24843) (Fission yeast), this protein is Putative lipoate-protein ligase A (aim22).